The primary structure comprises 321 residues: 26S proteasome non-ATPase regulatory subunit 7 (321 aa).

One can recognise an MPN domain in the interval 9–144 (VVVHPLVLLS…TEAYISVEEV (136 aa)). K180 participates in a covalent cross-link: Glycyl lysine isopeptide (Lys-Gly) (interchain with G-Cter in ubiquitin). N6-acetyllysine occurs at positions 204, 214, 313, and 314. The interval 281–321 (ANRDAEKKEGQEKEESKKERKDDKEKEKSDAAKKEEKKEKK) is disordered.

This sequence belongs to the peptidase M67A family. Component of the 19S proteasome regulatory particle complex. The 26S proteasome consists of a 20S core particle (CP) and two 19S regulatory subunits (RP). The regulatory particle is made of a lid composed of 9 subunits including PSMD7, a base containing 6 ATPases and few additional components. Within the complex, PSMD7 interacts with subunit PSMD4 through their respective MPN domain. Interacts with TRIM5.

Functionally, component of the 26S proteasome, a multiprotein complex involved in the ATP-dependent degradation of ubiquitinated proteins. This complex plays a key role in the maintenance of protein homeostasis by removing misfolded or damaged proteins, which could impair cellular functions, and by removing proteins whose functions are no longer required. Therefore, the proteasome participates in numerous cellular processes, including cell cycle progression, apoptosis, or DNA damage repair. The sequence is that of 26S proteasome non-ATPase regulatory subunit 7 (Psmd7) from Mus musculus (Mouse).